The primary structure comprises 235 residues: Acyl-protein thioesterase 1 (235 aa).

Catalysis depends on charge relay system residues Ser119, Asp172, and His206.

The protein belongs to the AB hydrolase superfamily. AB hydrolase 2 family.

Its subcellular location is the cytoplasm. The protein resides in the nucleus. It carries out the reaction S-hexadecanoyl-L-cysteinyl-[protein] + H2O = L-cysteinyl-[protein] + hexadecanoate + H(+). In terms of biological role, hydrolyzes fatty acids from S-acylated cysteine residues in proteins with a strong preference for palmitoylated G-alpha proteins over other acyl substrates. Mediates the deacylation of G-alpha proteins such as GPA1 in vivo, but has weak or no activity toward palmitoylated Ras proteins. Has weak lysophospholipase activity in vitro; however such activity may not exist in vivo. This chain is Acyl-protein thioesterase 1, found in Eremothecium gossypii (strain ATCC 10895 / CBS 109.51 / FGSC 9923 / NRRL Y-1056) (Yeast).